A 199-amino-acid chain; its full sequence is Thymidine kinase (199 aa).

Residues 15–22 (GSMFSGKS) and 88–91 (DEVQ) each bind ATP. Catalysis depends on Glu-89, which acts as the Proton acceptor. Zn(2+) is bound by residues Cys-145, Cys-148, Cys-183, and His-186.

This sequence belongs to the thymidine kinase family. As to quaternary structure, homotetramer.

The protein resides in the cytoplasm. The enzyme catalyses thymidine + ATP = dTMP + ADP + H(+). This Staphylococcus aureus (strain Mu50 / ATCC 700699) protein is Thymidine kinase.